Consider the following 1401-residue polypeptide: Enhancer of mRNA-decapping protein 4 (1401 aa).

Ala2 is modified (N-acetylalanine). 2 positions are modified to phosphoserine: Ser3 and Ser6. Positions 23 to 42 are disordered; it reads DRPAGGPSAESPRPSSAYNG. WD repeat units lie at residues 121–164, 167–206, 217–269, 287–326, 335–385, 389–426, and 432–475; these read QPVA…VISV, SERT…VWRL, ILVH…VWDL, KQGF…FWQI, RCLH…MWCT, TCLQ…LSDV, and YVME…LRHT. Position 125 is an N6-acetyllysine (Lys125). Positions 545–565 are disordered; sequence TFGESRPELGSEGLGSAAHGS. Ser560, Ser565, Ser583, and Ser585 each carry phosphoserine. Disordered stretches follow at residues 603-628 and 662-702; these read ASLQ…SSSS and DGSL…QVPT. Over residues 609–628 the composition is skewed to low complexity; sequence TASPSSSSSGSSSSSSSSSS. A compositionally biased stretch (polar residues) spans 663–675; that stretch reads GSLTMSSSGSLQA. Ser676 carries the post-translational modification Phosphoserine. Low complexity predominate over residues 677-689; that stretch reads PRGLLPGLLPAPA. Position 693 is a phosphothreonine (Thr693). Ser708, Ser723, and Ser725 each carry phosphoserine. 2 disordered regions span residues 717-741 and 778-808; these read LGLP…TALS and LLSP…HNTP. Polar residues predominate over residues 722-741; that stretch reads ASPSRTRSPDVISSASTALS. Residue Thr727 is modified to Phosphothreonine. Ser729 and Ser741 each carry phosphoserine. Thr821 is modified (phosphothreonine). 7 positions are modified to phosphoserine: Ser844, Ser871, Ser875, Ser879, Ser887, Ser890, and Ser892. Positions 868–946 are disordered; the sequence is QRDSQDASAE…RLTEHQVAEP (79 aa). The tract at residues 913-934 is sufficient for nuclear localization; the sequence is GSPRTSPKLKRKSKKDDGDAAM. Positions 954–1025 form a coiled coil; it reads IWQQQRELAE…GGQLQEQLTQ (72 aa). 2 positions are modified to phosphoserine: Ser967 and Ser1380.

Belongs to the WD repeat EDC4 family. As to quaternary structure, part of a decapping complex consisting of DCP1A, DCP2, EDC3, EDC4 and probably DDX6. Part of a complex consisting of DCP1A, EDC3, EDC4 and DDX6. Part of a complex consisting of DCP1B, EDC3, EDC4 and DDX6. Interacts with DCP2. Interacts with RC3H1. Interacts with NBDY. Interacts with TEX19. Interacts with LSM14A. Interacts with DDX6. (Microbial infection) Interacts with rotavirus A non-structural protein 2; this interaction probably plays a role in the sequestration of EDC4 in viral factories. Interacts with rotavirus A non-structural protein 5; this interaction probably plays a role in its sequestration in viral factories.

Its subcellular location is the cytoplasm. The protein localises to the P-body. It is found in the nucleus. Its function is as follows. In the process of mRNA degradation, seems to play a role in mRNA decapping. Component of a complex containing DCP2 and DCP1A which functions in decapping of ARE-containing mRNAs. Promotes complex formation between DCP1A and DCP2. Enhances the catalytic activity of DCP2 (in vitro). The protein is Enhancer of mRNA-decapping protein 4 (EDC4) of Homo sapiens (Human).